Here is a 37-residue protein sequence, read N- to C-terminus: Large ribosomal subunit protein bL36 (37 aa).

Belongs to the bacterial ribosomal protein bL36 family.

This chain is Large ribosomal subunit protein bL36, found in Campylobacter jejuni subsp. jejuni serotype O:6 (strain 81116 / NCTC 11828).